The sequence spans 278 residues: Rhomboid protease GlpG (278 aa).

A run of 6 helical transmembrane segments spans residues 94 to 114, 143 to 163, 175 to 195, 196 to 216, 224 to 241, and 245 to 267; these read AGPLTLSVMVLCIAIYILMLI, AFLHFSLLHILFNLMWWWYLG, LLVLTIVSAVFSGWGQSLFSG, ANFGGLSGVVYALMGYVWLTG, ISLPRGLMAFSVLWLIAG, and ILGLSIANAAHVSGLIIGLLMAF. Serine 202 (nucleophile) is an active-site residue. Residue histidine 255 is part of the active site.

The protein belongs to the peptidase S54 family.

The protein resides in the cell inner membrane. It catalyses the reaction Cleaves type-1 transmembrane domains using a catalytic dyad composed of serine and histidine that are contributed by different transmembrane domains.. In terms of biological role, rhomboid-type serine protease that catalyzes intramembrane proteolysis. This Yersinia pestis bv. Antiqua (strain Antiqua) protein is Rhomboid protease GlpG.